The following is a 218-amino-acid chain: Urease accessory protein UreG (218 aa).

22–29 (GPVGSGKT) is a binding site for GTP.

This sequence belongs to the SIMIBI class G3E GTPase family. UreG subfamily. As to quaternary structure, homodimer. UreD, UreF and UreG form a complex that acts as a GTP-hydrolysis-dependent molecular chaperone, activating the urease apoprotein by helping to assemble the nickel containing metallocenter of UreC. The UreE protein probably delivers the nickel.

It localises to the cytoplasm. In terms of biological role, facilitates the functional incorporation of the urease nickel metallocenter. This process requires GTP hydrolysis, probably effectuated by UreG. The protein is Urease accessory protein UreG of Polaromonas sp. (strain JS666 / ATCC BAA-500).